The following is a 507-amino-acid chain: Ribose import ATP-binding protein RbsA (507 aa).

2 consecutive ABC transporter domains span residues 7–242 and 253–497; these read LEMR…VGRP and IPLG…TGVT. 39–46 is an ATP binding site; sequence GENGAGKS.

It belongs to the ABC transporter superfamily. Ribose importer (TC 3.A.1.2.1) family. In terms of assembly, the complex is composed of an ATP-binding protein (RbsA), two transmembrane proteins (RbsC) and a solute-binding protein (RbsB).

The protein localises to the cell inner membrane. It carries out the reaction D-ribose(out) + ATP + H2O = D-ribose(in) + ADP + phosphate + H(+). Functionally, part of the ABC transporter complex RbsABC involved in ribose import. Responsible for energy coupling to the transport system. The protein is Ribose import ATP-binding protein RbsA of Yersinia pestis bv. Antiqua (strain Antiqua).